The chain runs to 362 residues: Adenosine deaminase (362 aa).

Residues His19 and His21 each contribute to the Zn(2+) site. Substrate-binding residues include His21, Asp23, and Gly181. His208 is a binding site for Zn(2+). Catalysis depends on Glu211, which acts as the Proton donor. Asp300 is a binding site for Zn(2+).

The protein belongs to the metallo-dependent hydrolases superfamily. Adenosine and AMP deaminases family. Adenosine deaminase subfamily. The cofactor is Zn(2+).

The enzyme catalyses adenosine + H2O + H(+) = inosine + NH4(+). It catalyses the reaction 2'-deoxyadenosine + H2O + H(+) = 2'-deoxyinosine + NH4(+). Its function is as follows. Catalyzes the hydrolytic deamination of adenosine and 2-deoxyadenosine. This Mycobacterium marinum (strain ATCC BAA-535 / M) protein is Adenosine deaminase.